The chain runs to 463 residues: NADH dehydrogenase [ubiquinone] iron-sulfur protein 2, mitochondrial (463 aa).

The N-terminal 33 residues, 1–33 (MAALRALRCLRGVGAPVLRPGSGIRLPSQPSRG), are a transit peptide targeting the mitochondrion. Residue Lys-62 is modified to N6-acetyllysine. Arg-118 is modified (symmetric dimethylarginine). Cys-326, Cys-332, and Cys-347 together coordinate [4Fe-4S] cluster.

It belongs to the complex I 49 kDa subunit family. In terms of assembly, core subunit of respiratory chain NADH dehydrogenase (Complex I) which is composed of 45 different subunits. Component of the iron-sulfur (IP) fragment of the enzyme. Interacts with NDUFAF3. Interacts with NDUFAF7. Interacts with CERS2. It depends on [4Fe-4S] cluster as a cofactor. Post-translationally, dimethylation at Arg-118 by NDUFAF7 takes place after NDUFS2 assembles into the complex I, leading to stabilize the early intermediate complex.

The protein resides in the mitochondrion inner membrane. The catalysed reaction is a ubiquinone + NADH + 5 H(+)(in) = a ubiquinol + NAD(+) + 4 H(+)(out). Core subunit of the mitochondrial membrane respiratory chain NADH dehydrogenase (Complex I) which catalyzes electron transfer from NADH through the respiratory chain, using ubiquinone as an electron acceptor. Essential for the catalytic activity and assembly of complex I. Redox-sensitive, critical component of the oxygen-sensing pathway in the pulmonary vasculature which plays a key role in acute pulmonary oxygen-sensing and hypoxic pulmonary vasoconstriction. Plays an important role in carotid body sensing of hypoxia. Essential for glia-like neural stem and progenitor cell proliferation, differentiation and subsequent oligodendrocyte or neuronal maturation. The chain is NADH dehydrogenase [ubiquinone] iron-sulfur protein 2, mitochondrial (Ndufs2) from Mus musculus (Mouse).